Here is a 1127-residue protein sequence, read N- to C-terminus: Zinc finger protein basonuclin-2 (1127 aa).

The interval serine 44–aspartate 67 is disordered. Positions valine 49–aspartate 67 are enriched in basic and acidic residues. Lysine 305 is covalently cross-linked (Glycyl lysine isopeptide (Lys-Gly) (interchain with G-Cter in SUMO2)). A disordered region spans residues serine 386 to serine 450. Residues asparagine 389–serine 400 are compositionally biased toward low complexity. A compositionally biased stretch (polar residues) spans proline 403–glutamate 422. Glycyl lysine isopeptide (Lys-Gly) (interchain with G-Cter in SUMO2) cross-links involve residues lysine 424, lysine 444, and lysine 449. The C2H2-type 1 zinc-finger motif lies at valine 469 to histidine 492. A Phosphoserine modification is found at serine 589. Residue lysine 669 forms a Glycyl lysine isopeptide (Lys-Gly) (interchain with G-Cter in SUMO2) linkage. The interval isoleucine 675 to leucine 772 is disordered. The span at aspartate 676–asparagine 689 shows a compositional bias: acidic residues. Composition is skewed to basic and acidic residues over residues methionine 698–aspartate 708 and glutamate 747–leucine 772. Residues lysine 861–histidine 884 form a C2H2-type 2 zinc finger. Residues lysine 922 and lysine 947 each participate in a glycyl lysine isopeptide (Lys-Gly) (interchain with G-Cter in SUMO2) cross-link. Disordered stretches follow at residues leucine 955–glycine 976 and leucine 996–glycine 1041. Residues alanine 1010 to glycine 1023 show a composition bias toward acidic residues. C2H2-type zinc fingers lie at residues isoleucine 1063–histidine 1086 and histidine 1091–histidine 1118. Residues serine 1107–aspartate 1127 are disordered.

As to expression, highly expressed in ovary, testis and kidney. Expressed at moderate levels in skin and small intestine, and at lower levels in lung. Trace amounts of expression detected in liver and colon. Not detected in brain, spleen or thymus.

Its subcellular location is the nucleus. Functionally, probable transcription factor specific for skin keratinocytes. May play a role in the differentiation of spermatozoa and oocytes. May also play an important role in early urinary-tract development. In Mus musculus (Mouse), this protein is Zinc finger protein basonuclin-2.